Here is a 368-residue protein sequence, read N- to C-terminus: tRNA 2-selenouridine synthase (368 aa).

A Rhodanese domain is found at 15–138 (FLNQHPIMDV…MRQYLIGVIE (124 aa)). The active-site S-selanylcysteine intermediate is C98.

This sequence belongs to the SelU family. As to quaternary structure, monomer.

It carries out the reaction 5-methylaminomethyl-2-thiouridine(34) in tRNA + selenophosphate + (2E)-geranyl diphosphate + H2O + H(+) = 5-methylaminomethyl-2-selenouridine(34) in tRNA + (2E)-thiogeraniol + phosphate + diphosphate. The enzyme catalyses 5-methylaminomethyl-2-thiouridine(34) in tRNA + (2E)-geranyl diphosphate = 5-methylaminomethyl-S-(2E)-geranyl-thiouridine(34) in tRNA + diphosphate. The catalysed reaction is 5-methylaminomethyl-S-(2E)-geranyl-thiouridine(34) in tRNA + selenophosphate + H(+) = 5-methylaminomethyl-2-(Se-phospho)selenouridine(34) in tRNA + (2E)-thiogeraniol. It catalyses the reaction 5-methylaminomethyl-2-(Se-phospho)selenouridine(34) in tRNA + H2O = 5-methylaminomethyl-2-selenouridine(34) in tRNA + phosphate. Functionally, involved in the post-transcriptional modification of the uridine at the wobble position (U34) of tRNA(Lys), tRNA(Glu) and tRNA(Gln). Catalyzes the conversion of 2-thiouridine (S2U-RNA) to 2-selenouridine (Se2U-RNA). Acts in a two-step process involving geranylation of 2-thiouridine (S2U) to S-geranyl-2-thiouridine (geS2U) and subsequent selenation of the latter derivative to 2-selenouridine (Se2U) in the tRNA chain. This Shewanella baltica (strain OS185) protein is tRNA 2-selenouridine synthase.